The following is a 246-amino-acid chain: 5'-nucleotidase SurE (246 aa).

A divalent metal cation-binding residues include Asp-8, Asp-9, Ser-39, and Asn-91.

Belongs to the SurE nucleotidase family. It depends on a divalent metal cation as a cofactor.

The protein localises to the cytoplasm. The enzyme catalyses a ribonucleoside 5'-phosphate + H2O = a ribonucleoside + phosphate. Its function is as follows. Nucleotidase that shows phosphatase activity on nucleoside 5'-monophosphates. The polypeptide is 5'-nucleotidase SurE (Actinobacillus succinogenes (strain ATCC 55618 / DSM 22257 / CCUG 43843 / 130Z)).